A 115-amino-acid chain; its full sequence is U3-lycotoxin-Ls1p (115 aa).

The N-terminal stretch at 1–20 (MKFVLLFGVLLVTLFSYSSA) is a signal peptide. A propeptide spanning residues 21–44 (EMFDDFDQADEDELLSLIEKEEAR) is cleaved from the precursor. 4 disulfide bridges follow: cysteine 48-cysteine 63, cysteine 55-cysteine 72, cysteine 62-cysteine 87, and cysteine 74-cysteine 85.

Belongs to the neurotoxin 19 (CSTX) family. 01 subfamily. Expressed by the venom gland.

Its subcellular location is the secreted. This Lycosa singoriensis (Wolf spider) protein is U3-lycotoxin-Ls1p.